Reading from the N-terminus, the 503-residue chain is Lycopene beta cyclase, chloroplastic/chromoplastic (503 aa).

The N-terminal 85 residues, M1 to A85, are a transit peptide targeting the chloroplast and chromoplast. L90–P117 lines the NAD(+) pocket.

It belongs to the lycopene cyclase family.

The protein resides in the plastid. Its subcellular location is the chloroplast. The protein localises to the chromoplast. It is found in the chromoplast membrane. It localises to the chloroplast membrane. The catalysed reaction is a carotenoid psi-end group = a carotenoid beta-end derivative. It functions in the pathway carotenoid biosynthesis; beta-carotene biosynthesis. Its pathway is carotenoid biosynthesis; beta-zeacarotene biosynthesis. Its function is as follows. Catalyzes the double cyclization reaction which converts lycopene to beta-carotene and neurosporene to beta-zeacarotene. The protein is Lycopene beta cyclase, chloroplastic/chromoplastic (LCY1) of Narcissus pseudonarcissus (Daffodil).